Reading from the N-terminus, the 210-residue chain is Glutathione S-transferase 4 (210 aa).

The GST N-terminal domain maps to 1-80 (MDFYYLPLSA…YLVEKYGKQD (80 aa)). Residues Ser9, 50-52 (HTI), and 64-66 (ESR) contribute to the glutathione site. The region spanning 87-208 (CPKKRALINQ…AGALEMKTLI (122 aa)) is the GST C-terminal domain.

This sequence belongs to the GST superfamily. Theta family. Homodimer.

The enzyme catalyses RX + glutathione = an S-substituted glutathione + a halide anion + H(+). In terms of biological role, conjugation of reduced glutathione to a wide number of exogenous and endogenous hydrophobic electrophiles. In Musca domestica (House fly), this protein is Glutathione S-transferase 4 (Gst4).